Reading from the N-terminus, the 2587-residue chain is Fap1 adhesin (2587 aa).

The signal sequence occupies residues 1 to 85; sequence MGKYKRAGET…ATVVSGNVFA (85 aa). 4 disordered regions span residues 107-158, 173-212, 515-539, and 568-2558; these read SSEN…SESV, SISE…DSVR, DSIP…KSIS, and ESIT…GENV. The interval 107-195 is ser-rich region 1, SRR1; it reads SSENFDSEKA…IVLSESGAAS (89 aa). Low complexity-rich tracts occupy residues 121–158 and 173–191; these read SLSQ…SESV and SISE…LSES. The sufficient to block adherence to beads stretch occupies residues 191–522; it reads SGAASGNKAT…NADSIPSDTT (332 aa). Polar residues predominate over residues 192–202; it reads GAASGNKATSK. Positions 203–212 are enriched in basic and acidic residues; sequence GTEEKQDSVR. The segment at 516 to 2561 is ser-rich region 2, SRR2; it reads SIPSDTTSQS…PNTGENVSSS (2046 aa). Low complexity-rich tracts occupy residues 519–539 and 568–2545; these read SDTT…KSIS and ESIT…VSES. The interval 2367–2587 is required for localization to cell wall, fimbriae formation and adherence to saliva-coated hydroxyapatite beads (SHA) but not secretion; that stretch reads SESISESVSE…RKKRKSEDAE (221 aa). An LPXTG sorting signal motif is present at residues 2551-2555; the sequence is LPNTG. A Pentaglycyl murein peptidoglycan amidated threonine modification is found at Thr-2554. Positions 2555-2587 are cleaved as a propeptide — removed by sortase; the sequence is GENVSSSLGLVGLSGLLFGALLGRKKRKSEDAE.

The protein belongs to the serine-rich repeat protein (SRRP) family. Glycosylated; occurs within the cytoplasm. It is probable that most of the Ser residues in SSR1 and SSR2 are O-GlcNAcylated. Sequential glycosylation by sugar transferases are able to generate complex sugar polymorphisms.

It localises to the cytoplasm. The protein localises to the secreted. It is found in the cell wall. The protein resides in the fimbrium. The major structural element of fimbriae. Required for adherence to saliva-coated hydroxyapatite beads (SHA), an in vitro tooth model. A Fap1-dependent increase in adherence is seen as the pH is reduced from pH 8 to pH 5. This is Fap1 adhesin (fap1) from Streptococcus parasanguinis.